An 857-amino-acid chain; its full sequence is Gelation factor (857 aa).

Residue Met-1 is modified to Blocked amino end (Met). The interval 1–250 is actin-binding; that stretch reads MAAAPSGKTW…EKKRRETSDA (250 aa). Calponin-homology (CH) domains lie at 12 to 117 and 125 to 227; these read DVQK…LRYQ and NSPK…DYAL. A regulatory site region spans residues 229 to 246; the sequence is KEKRDADALAALEKKRRE. Filamin repeat units lie at residues 245–346, 347–446, 447–545, 546–645, 646–747, and 763–837; these read RETS…NVKI, DGSD…EVKI, LNSD…SIHI, KPAA…TVTV, KPAP…DVKC, and FTVA…KQVL. Residues 832–857 form a disordered region; it reads PFKQVLGNPGKKNPEVKSFTTTRTAN.

In terms of assembly, homodimer.

Its function is as follows. F-actin cross-linking protein. This Dictyostelium discoideum (Social amoeba) protein is Gelation factor (abpC).